A 413-amino-acid chain; its full sequence is Dolichyl-diphosphooligosaccharide--protein glycosyltransferase 48 kDa subunit (413 aa).

The Lumenal portion of the chain corresponds to glycine 1 to tyrosine 383. A helical membrane pass occupies residues proline 384–leucine 404. At histidine 405–aspartate 413 the chain is on the cytoplasmic side.

This sequence belongs to the DDOST 48 kDa subunit family. Component of the oligosaccharyltransferase (OST) complex.

It is found in the endoplasmic reticulum. The protein resides in the endoplasmic reticulum membrane. The protein operates within protein modification; protein glycosylation. Subunit of the oligosaccharyl transferase (OST) complex that catalyzes the initial transfer of a defined glycan (Glc(3)Man(9)GlcNAc(2) in eukaryotes) from the lipid carrier dolichol-pyrophosphate to an asparagine residue within an Asn-X-Ser/Thr consensus motif in nascent polypeptide chains, the first step in protein N-glycosylation. N-glycosylation occurs cotranslationally and the complex associates with the Sec61 complex at the channel-forming translocon complex that mediates protein translocation across the endoplasmic reticulum (ER). All subunits are required for a maximal enzyme activity. Required for the assembly of both SST3A- and SS3B-containing OST complexes. The sequence is that of Dolichyl-diphosphooligosaccharide--protein glycosyltransferase 48 kDa subunit from Gallus gallus (Chicken).